Here is a 218-residue protein sequence, read N- to C-terminus: UPF0598 protein C8orf82 homolog (218 aa).

The protein belongs to the UPF0598 family.

The sequence is that of UPF0598 protein C8orf82 homolog from Bos taurus (Bovine).